Consider the following 438-residue polypeptide: UDP-N-acetylmuramoylalanine--D-glutamate ligase (438 aa).

112–118 (GSNGKST) provides a ligand contact to ATP.

Belongs to the MurCDEF family.

Its subcellular location is the cytoplasm. The enzyme catalyses UDP-N-acetyl-alpha-D-muramoyl-L-alanine + D-glutamate + ATP = UDP-N-acetyl-alpha-D-muramoyl-L-alanyl-D-glutamate + ADP + phosphate + H(+). The protein operates within cell wall biogenesis; peptidoglycan biosynthesis. Functionally, cell wall formation. Catalyzes the addition of glutamate to the nucleotide precursor UDP-N-acetylmuramoyl-L-alanine (UMA). The sequence is that of UDP-N-acetylmuramoylalanine--D-glutamate ligase from Yersinia pseudotuberculosis serotype I (strain IP32953).